The chain runs to 282 residues: MFVRKSCYSLINATRRCLRYRQLSSTTAGTVGTTAPTANISLNDEPQPAAAEMDEFTKEFLRNRIEVSDIQRLILSAGSSVAALVDPRRHDMIACLGETTGREALEKILHYMRSTEEGQRILVEKPRINTRTVDMEALKKMPEHTFGYTYVKFMEDNNITPDSRMEVRFLDEPGLAYVMTRYRETHDMVHAILDMPTNMLGEVTVKWVEALNTGLPMCYGGAVFGAFRLRTKQRQNYLRKYLPWALRTGNRIKPLMGVYWEKRWEQDVTELRKELNIELLAP.

A mitochondrion-targeting transit peptide spans 1–30 (MFVRKSCYSLINATRRCLRYRQLSSTTAGT). Residues histidine 186, aspartate 187, histidine 190, and glutamate 202 each coordinate Zn(2+).

It belongs to the COQ4 family. As to quaternary structure, component of a multi-subunit COQ enzyme complex. Requires Zn(2+) as cofactor.

Its subcellular location is the mitochondrion inner membrane. It catalyses the reaction a 4-hydroxy-3-methoxy-5-(all-trans-polyprenyl)benzoate + H(+) = a 2-methoxy-6-(all-trans-polyprenyl)phenol + CO2. It participates in cofactor biosynthesis; ubiquinone biosynthesis. In terms of biological role, lyase that catalyzes the C1-decarboxylation of 4-hydroxy-3-methoxy-5-(all-trans-polyprenyl)benzoic acid into 2-methoxy-6-(all-trans-polyprenyl)phenol during ubiquinone biosynthesis. In Anopheles gambiae (African malaria mosquito), this protein is Ubiquinone biosynthesis protein COQ4 homolog, mitochondrial.